The following is a 104-amino-acid chain: MQPNDITFYQRFEADILAGRKTITIRDKSESYFKAGDILRVGRFEDNQYFCTIEVLSVSPITLDELTEQHAKQENMGLAELREVIKTIYPNESEFWVIEIRLVN.

Residues 6-102 (ITFYQRFEAD…SEFWVIEIRL (97 aa)) enclose the ASCH domain. K21 (proton acceptor) is an active-site residue. The Nucleophile role is filled by T24. The active-site Proton donor is E74.

Belongs to the N(4)-acetylcytidine amidohydrolase family.

The catalysed reaction is N(4)-acetylcytidine + H2O = cytidine + acetate + H(+). The enzyme catalyses N(4)-acetyl-2'-deoxycytidine + H2O = 2'-deoxycytidine + acetate + H(+). It catalyses the reaction N(4)-acetylcytosine + H2O = cytosine + acetate + H(+). Catalyzes the hydrolysis of N(4)-acetylcytidine (ac4C). The chain is N(4)-acetylcytidine amidohydrolase from Haemophilus influenzae (strain PittEE).